Here is a 685-residue protein sequence, read N- to C-terminus: DNA ligase (685 aa).

NAD(+)-binding positions include Asp-47–Asp-51, Ser-96–Leu-97, and Glu-125. Residue Lys-127 is the N6-AMP-lysine intermediate of the active site. NAD(+) contacts are provided by Arg-148, Glu-185, Lys-304, and Lys-328. 4 residues coordinate Zn(2+): Cys-422, Cys-425, Cys-440, and Cys-446. The region spanning Ala-605–Ala-685 is the BRCT domain.

The protein belongs to the NAD-dependent DNA ligase family. LigA subfamily. Requires Mg(2+) as cofactor. The cofactor is Mn(2+).

It carries out the reaction NAD(+) + (deoxyribonucleotide)n-3'-hydroxyl + 5'-phospho-(deoxyribonucleotide)m = (deoxyribonucleotide)n+m + AMP + beta-nicotinamide D-nucleotide.. Its function is as follows. DNA ligase that catalyzes the formation of phosphodiester linkages between 5'-phosphoryl and 3'-hydroxyl groups in double-stranded DNA using NAD as a coenzyme and as the energy source for the reaction. It is essential for DNA replication and repair of damaged DNA. The protein is DNA ligase of Shewanella baltica (strain OS223).